Consider the following 994-residue polypeptide: Glutamate [NMDA] receptor subunit 1 (994 aa).

Positions Met-1–Ala-23 are cleaved as a signal peptide. At Ala-24–Ser-570 the chain is on the extracellular side. 7 N-linked (GlcNAc...) asparagine glycosylation sites follow: Asn-255, Asn-311, Asn-342, Asn-394, Asn-451, Asn-478, and Asn-498. Residues Pro-527 to Thr-529 and Arg-534 contribute to the glycine site. The chain crosses the membrane as a helical span at residues Asn-571 to Leu-591. At Asp-592 to Trp-648 the chain is on the cytoplasmic side. A helical transmembrane segment spans residues Ala-649 to Leu-669. The Extracellular segment spans residues Glu-670 to Asn-828. Asn-690 carries an N-linked (GlcNAc...) asparagine glycan. Positions 700 and 744 each coordinate glycine. The helical transmembrane segment at Met-829 to Ile-849 threads the bilayer. Residues Glu-850–Val-994 are Cytoplasmic-facing. The segment at Arg-971–Val-994 is disordered. Positions Gly-984–Val-994 are enriched in polar residues.

The protein belongs to the glutamate-gated ion channel (TC 1.A.10.1) family. In terms of assembly, forms a heteromeric NMDA channel with Nmdar2.

The protein localises to the cell membrane. The protein resides in the postsynaptic cell membrane. Its subcellular location is the postsynaptic density. Functionally, NMDA receptor subtype of glutamate-gated ion channels with high calcium permeability and voltage-dependent sensitivity to magnesium. Mediated by glycine. This protein plays a key role in synaptic plasticity, synaptogenesis, excitotoxicity, memory acquisition and learning. It mediates neuronal functions in glutamate neurotransmission. Is involved in the cell surface targeting of NMDA receptors. Plays a role in associative learning and in long-term memory consolidation. This is Glutamate [NMDA] receptor subunit 1 from Drosophila ananassae (Fruit fly).